Reading from the N-terminus, the 307-residue chain is OTU domain-containing protein 2 (307 aa).

Disordered regions lie at residues 23 to 46 (ENKD…RKEV) and 96 to 130 (SRDE…AKRD). Positions 103-114 (QNVPVQQQQQGQ) are enriched in low complexity. Residues 167 to 307 (LKQFDIQPDG…GEHYNSLHDS (141 aa)) form the OTU domain.

In Saccharomyces cerevisiae (strain ATCC 204508 / S288c) (Baker's yeast), this protein is OTU domain-containing protein 2 (OTU2).